The following is a 227-amino-acid chain: Orotate phosphoribosyltransferase 2 (227 aa).

41–42 (FF) serves as a coordination point for orotate. 5-phospho-alpha-D-ribose 1-diphosphate-binding positions include 79–80 (YK), Arg109, Lys110, Lys113, His115, and 135–143 (DDVMTAGTA). Orotate-binding residues include Thr139 and Arg167.

It belongs to the purine/pyrimidine phosphoribosyltransferase family. PyrE subfamily. Homodimer.

The catalysed reaction is orotidine 5'-phosphate + diphosphate = orotate + 5-phospho-alpha-D-ribose 1-diphosphate. Its pathway is pyrimidine metabolism; UMP biosynthesis via de novo pathway; UMP from orotate: step 1/2. Its function is as follows. Catalyzes the transfer of a ribosyl phosphate group from 5-phosphoribose 1-diphosphate to orotate, leading to the formation of orotidine monophosphate (OMP). The sequence is that of Orotate phosphoribosyltransferase 2 (URA10) from Saccharomyces cerevisiae (strain ATCC 204508 / S288c) (Baker's yeast).